The primary structure comprises 287 residues: uncharacterized protein (287 aa).

This is an uncharacterized protein from Archaeoglobus fulgidus (strain ATCC 49558 / DSM 4304 / JCM 9628 / NBRC 100126 / VC-16).